Here is a 343-residue protein sequence, read N- to C-terminus: Protein RecA (343 aa).

An ATP-binding site is contributed by 64-71 (GPESSGKT).

It belongs to the RecA family.

It is found in the cytoplasm. Can catalyze the hydrolysis of ATP in the presence of single-stranded DNA, the ATP-dependent uptake of single-stranded DNA by duplex DNA, and the ATP-dependent hybridization of homologous single-stranded DNAs. It interacts with LexA causing its activation and leading to its autocatalytic cleavage. The polypeptide is Protein RecA (Bacillus cereus (strain B4264)).